The primary structure comprises 688 residues: Phosphatidylinositol 4-phosphate 5-kinase type-1 gamma (688 aa).

The tract at residues 48-71 (GQPGPGHGKKLGHRGVDASGETTY) is disordered. One can recognise a PIPK domain in the interval 75 to 443 (TSSTLKGAIQ…RFFKFMSSTV (369 aa)). K265 and K268 each carry N6-acetyllysine. Asymmetric dimethylarginine; alternate is present on R459. R459 carries the post-translational modification Omega-N-methylarginine; alternate. A compositionally biased stretch (low complexity) spans 525-534 (TTLSSTSLSI). Disordered stretches follow at residues 525 to 565 (TTLS…QEEL) and 592 to 629 (GAGV…EEDA). Phosphoserine is present on S554. A compositionally biased stretch (low complexity) spans 602 to 623 (ASAAATVEVDAASQASEPASQA). The residue at position 635 (Y635) is a Phosphotyrosine; by EGFR. The residue at position 671 (Y671) is a Phosphotyrosine; by CSK. Phosphoserine; by CDK5, MAPK1 and CDK1 is present on S672. Phosphoserine is present on residues S682 and S686. T688 carries the post-translational modification Phosphothreonine.

In terms of assembly, interacts with TLN1. Interacts with TLN2; interaction stimulates 1-phosphatidylinositol-4-phosphate 5-kinase activity. May compete with beta-integrins for the same binding site on TLN1 and TLN2. Interacts with ARF6; interaction stimulates 1-phosphatidylinositol-4-phosphate 5-kinase activity. Interacts with AP2B1. Interacts with AP2M1; phosphorylation of PIP5K1C by CSK disrupts the interaction; clathrin competes with PIP5K1C. Interacts with CDH1. Interacts with CSK. Interacts with PLCG1; interaction is abolished upon EGF stimulation. Interacts with LAPTM4B; promotes SNX5 association with LAPTM4B; kinase activity of PIP5K1C is required; interaction is regulated by phosphatidylinositol 4,5-bisphosphate generated by PIP5K1C. Phosphorylation on Ser-672 negatively regulates binding to TLN2 and is strongly stimulated in mitosis. Phosphorylation on Tyr-671 is necessary for targeting to focal adhesions. Phosphorylation on Ser-672 and Tyr-671 are mutually exclusive. Phosphorylated by SYK and CSK. Tyrosine phosphorylation is enhanced by PTK2 signaling. Phosphorylated at Tyr-635 upon EGF stimulation. Some studies suggest that phosphorylation on Tyr-671 enhances binding to tailins (TLN1 and TLN2); others that phosphorylation at Tyr-671 does not directly enhance binding to tailins (TLN1 and TLN2) but may act indirectly by inhibiting phosphorylation at Ser-672. Post-translationally, acetylation at Lys-265 and Lys-268 seems to decrease lipid kinase activity. Deacetylation of these sites by SIRT1 positively regulates the exocytosis of TSH-containing granules from pituitary cells.

It is found in the cell membrane. Its subcellular location is the endomembrane system. The protein resides in the cytoplasm. It localises to the cell junction. The protein localises to the focal adhesion. It is found in the adherens junction. Its subcellular location is the cell projection. The protein resides in the ruffle membrane. It localises to the phagocytic cup. The protein localises to the uropodium. The catalysed reaction is a 1,2-diacyl-sn-glycero-3-phospho-(1D-myo-inositol 4-phosphate) + ATP = a 1,2-diacyl-sn-glycero-3-phospho-(1D-myo-inositol-4,5-bisphosphate) + ADP + H(+). It carries out the reaction 1-octadecanoyl-2-(5Z,8Z,11Z,14Z)-eicosatetraenoyl-sn-glycero-3-phospho-1D-myo-inositol 4-phosphate + ATP = 1-octadecanoyl-2-(5Z,8Z,11Z,14Z)-eicosatetraenoyl-sn-glycero-3-phospho-1D-myo-inositol 4,5-bisphosphate + ADP + H(+). The enzyme catalyses 1-octadecanoyl-2-(9Z)-octadecenoyl-sn-glycero-3-phospho-1D-myo-inositol 4-phosphate + ATP = 1-octadecanoyl-2-(9Z)-octadecenoyl-sn-glycero-3-phospho-1D-myo-inositol 4,5-bisphosphate + ADP + H(+). It catalyses the reaction 1-octadecanoyl-2-(9Z)-octadecenoyl-sn-glycero-3-phospho-1D-myo-inositol + ATP = 1-octadecanoyl-2-(9Z)-octadecenoyl-sn-glycero-3-phospho-1D-myo-inositol 5-phosphate + ADP + H(+). The catalysed reaction is 1-octadecanoyl-2-(9Z,12Z)-octadecadienoyl-sn-glycero-3-phospho-1D-myo-inositol + ATP = 1-octadecanoyl-2-(9Z,12Z)-octadecadienoyl-sn-glycero-3-phospho-1D-myo-inositol 5-phosphate + ADP + H(+). It carries out the reaction 1-octadecanoyl-2-(5Z,8Z,11Z,14Z-eicosatetraenoyl)-sn-glycero-3-phospho-(1D-myo-inositol) + ATP = 1-octadecanoyl-2-(5Z,8Z,11Z,14Z)-eicosatetraenoyl-sn-glycero-3-phospho-1D-myo-inositol 5-phosphate + ADP + H(+). The enzyme catalyses 1,2-di-(9Z,12Z)-octadecadienoyl-sn-glycero-3-phospho-1D-myo-inositol + ATP = 1,2-di(9Z,12Z)-octadecadienoyl-sn-glycero-3-phospho-1D-myo-inositol 5-phosphate + ADP + H(+). Functionally, catalyzes the phosphorylation of phosphatidylinositol 4-phosphate (PtdIns(4)P/PI4P) to form phosphatidylinositol 4,5-bisphosphate (PtdIns(4,5)P2/PIP2), a lipid second messenger that regulates several cellular processes such as signal transduction, vesicle trafficking, actin cytoskeleton dynamics, cell adhesion, and cell motility. PtdIns(4,5)P2 can directly act as a second messenger or can be utilized as a precursor to generate other second messengers: inositol 1,4,5-trisphosphate (IP3), diacylglycerol (DAG) or phosphatidylinositol-3,4,5-trisphosphate (PtdIns(3,4,5)P3/PIP3). PIP5K1A-mediated phosphorylation of PtdIns(4)P is the predominant pathway for PtdIns(4,5)P2 synthesis. Together with PIP5K1A, is required for phagocytosis, both enzymes regulating different types of actin remodeling at sequential steps. Promotes particle attachment by generating the pool of PtdIns(4,5)P2 that induces controlled actin depolymerization to facilitate Fc-gamma-R clustering. Mediates RAC1-dependent reorganization of actin filaments. Required for synaptic vesicle transport. Controls the plasma membrane pool of PtdIns(4,5)P2 implicated in synaptic vesicle endocytosis and exocytosis. Plays a role in endocytosis mediated by clathrin and AP-2 (adaptor protein complex 2). Required for clathrin-coated pits assembly at the synapse. Participates in cell junction assembly. Modulates adherens junctions formation by facilitating CDH1/cadherin trafficking. Required for focal adhesion dynamics. Modulates the targeting of talins (TLN1 and TLN2) to the plasma membrane and their efficient assembly into focal adhesions. Regulates the interaction between talins (TLN1 and TLN2) and beta-integrins. Required for uropodium formation and retraction of the cell rear during directed migration. Has a role in growth factor-stimulated directional cell migration and adhesion. Required for talin assembly into nascent adhesions forming at the leading edge toward the direction of the growth factor. Negative regulator of T-cell activation and adhesion. Negatively regulates integrin alpha-L/beta-2 (LFA-1) polarization and adhesion induced by T-cell receptor. Together with PIP5K1A has a role during embryogenesis and together with PIP5K1B may have a role immediately after birth. The protein is Phosphatidylinositol 4-phosphate 5-kinase type-1 gamma of Rattus norvegicus (Rat).